The following is a 552-amino-acid chain: Lysine--tRNA ligase (552 aa).

The 'HIGH' region motif lies at 72 to 80 (PSGLPHLGT). The 'KMSKS' region motif lies at 320 to 324 (KISKS). An ATP-binding site is contributed by lysine 323.

The protein belongs to the class-I aminoacyl-tRNA synthetase family.

The protein localises to the cytoplasm. It carries out the reaction tRNA(Lys) + L-lysine + ATP = L-lysyl-tRNA(Lys) + AMP + diphosphate. The chain is Lysine--tRNA ligase from Caulobacter vibrioides (strain ATCC 19089 / CIP 103742 / CB 15) (Caulobacter crescentus).